The chain runs to 692 residues: Putative clathrin assembly protein At1g14910 (692 aa).

In terms of domain architecture, ENTH spans 24–161 (RVNSDYAELD…ECFRVLKYDI (138 aa)). The segment at 325–383 (YTPDDGLTSEDVGPSHEEHETSSPSDSAVVPSEETQLSSQSPPSVETPQNFIDTDDLLG) is disordered. The span at 357–376 (EETQLSSQSPPSVETPQNFI) shows a compositional bias: polar residues. Ser-363 is subject to Phosphoserine. Repeat unit 1 spans residues 532–548 (FGEFPIVPVSEPQSTTS). An 8 X 17 AA approximate tandem repeats region spans residues 532–666 (FGEFPIVPVS…PVSEPQNTTG (135 aa)). The 2; truncated repeat unit spans residues 549–564 (FGAFPVPVSEPSNTTG). 6 consecutive repeat copies span residues 565-581 (FGEI…NTTA), 582-598 (FGEF…NITG), 599-615 (FGAL…NTTG), 616-632 (FGEF…NTTG), 633-649 (FGAL…KTTG), and 650-666 (LGEF…NTTG).

In terms of tissue distribution, expressed in the whole plant.

Its subcellular location is the membrane. It localises to the clathrin-coated pit. It is found in the golgi apparatus. The protein resides in the cytoplasmic vesicle. The protein localises to the clathrin-coated vesicle. The protein is Putative clathrin assembly protein At1g14910 of Arabidopsis thaliana (Mouse-ear cress).